The chain runs to 547 residues: Glucose-6-phosphate isomerase (547 aa).

Glutamate 353 functions as the Proton donor in the catalytic mechanism. Residues histidine 384 and lysine 512 contribute to the active site.

The protein belongs to the GPI family.

The protein localises to the cytoplasm. It catalyses the reaction alpha-D-glucose 6-phosphate = beta-D-fructose 6-phosphate. The protein operates within carbohydrate biosynthesis; gluconeogenesis. It participates in carbohydrate degradation; glycolysis; D-glyceraldehyde 3-phosphate and glycerone phosphate from D-glucose: step 2/4. Its function is as follows. Catalyzes the reversible isomerization of glucose-6-phosphate to fructose-6-phosphate. The polypeptide is Glucose-6-phosphate isomerase (Campylobacter jejuni subsp. doylei (strain ATCC BAA-1458 / RM4099 / 269.97)).